The following is a 399-amino-acid chain: MKRVILHCDLNNFYASVECLYHPELRDKPVAVCGSIEDRHGIVLAKNYAAKKYKVKTGETVWEAKNKCPGLVVVKANHSLYYKFSKYARQIYEYYTDRVESFGLDECWLDVSESTLLFGDGTKIANEIRERIKRELGVTVSVGVSYNKVFAKLGSDMKKPDAVTVITENDFKEKIWGLPVEALLYVGDSTKKKLNNMAVFTIGDLANCHSEFLVRQLGKWGYTLWSFANGYDTSPVAKNDCEIPIKSIGNSLTAPRDLTNNEDVRILIYVLSESVGERLRSHNLKGRTVQISIKDPELQTLERQAGLDIHTSITSEIAQKAYEIFLKSWNWSKNVRALGVRVTDLVESDTCTQISLFSDDIKRQKLEILDECVDRVRERFGYYSVRRGILLQDRGLNRI.

One can recognise a UmuC domain in the interval 5 to 187 (ILHCDLNNFY…LPVEALLYVG (183 aa)). Residues Asp9 and Asp105 each coordinate Mg(2+). Glu106 is an active-site residue.

Belongs to the DNA polymerase type-Y family. As to quaternary structure, monomer. Mg(2+) serves as cofactor.

The protein resides in the cytoplasm. The enzyme catalyses DNA(n) + a 2'-deoxyribonucleoside 5'-triphosphate = DNA(n+1) + diphosphate. Poorly processive, error-prone DNA polymerase involved in untargeted mutagenesis. Copies undamaged DNA at stalled replication forks, which arise in vivo from mismatched or misaligned primer ends. These misaligned primers can be extended by PolIV. Exhibits no 3'-5' exonuclease (proofreading) activity. May be involved in translesional synthesis, in conjunction with the beta clamp from PolIII. The protein is DNA polymerase IV of Acetivibrio thermocellus (strain ATCC 27405 / DSM 1237 / JCM 9322 / NBRC 103400 / NCIMB 10682 / NRRL B-4536 / VPI 7372) (Clostridium thermocellum).